Here is a 1024-residue protein sequence, read N- to C-terminus: Protein translocase subunit SecA (1024 aa).

ATP-binding positions include Gln143, 161 to 165, and Asp661; that span reads GEGKT. Residues 970–1024 form a disordered region; that stretch reads HEEAGSVYNAQPDGEPESQASKQQPVVADHSKPGRNDLCPCGSGKKYKNCHGREA. Zn(2+)-binding residues include Cys1008, Cys1010, Cys1019, and His1020. The segment covering 1014–1024 has biased composition (basic residues); sequence KKYKNCHGREA.

It belongs to the SecA family. Monomer and homodimer. Part of the essential Sec protein translocation apparatus which comprises SecA, SecYEG and auxiliary proteins SecDF. Other proteins may also be involved. Requires Zn(2+) as cofactor.

The protein localises to the cell inner membrane. It localises to the cytoplasm. The enzyme catalyses ATP + H2O + cellular proteinSide 1 = ADP + phosphate + cellular proteinSide 2.. Part of the Sec protein translocase complex. Interacts with the SecYEG preprotein conducting channel. Has a central role in coupling the hydrolysis of ATP to the transfer of proteins into and across the cell membrane, serving as an ATP-driven molecular motor driving the stepwise translocation of polypeptide chains across the membrane. The sequence is that of Protein translocase subunit SecA from Chlorobium luteolum (strain DSM 273 / BCRC 81028 / 2530) (Pelodictyon luteolum).